A 196-amino-acid chain; its full sequence is ATP-dependent Clp protease proteolytic subunit 1 (196 aa).

Catalysis depends on Ser-96, which acts as the Nucleophile. Residue His-121 is part of the active site.

This sequence belongs to the peptidase S14 family. In terms of assembly, fourteen ClpP subunits assemble into 2 heptameric rings which stack back to back to give a disk-like structure with a central cavity, resembling the structure of eukaryotic proteasomes.

It localises to the cytoplasm. It carries out the reaction Hydrolysis of proteins to small peptides in the presence of ATP and magnesium. alpha-casein is the usual test substrate. In the absence of ATP, only oligopeptides shorter than five residues are hydrolyzed (such as succinyl-Leu-Tyr-|-NHMec, and Leu-Tyr-Leu-|-Tyr-Trp, in which cleavage of the -Tyr-|-Leu- and -Tyr-|-Trp bonds also occurs).. Cleaves peptides in various proteins in a process that requires ATP hydrolysis. Has a chymotrypsin-like activity. Plays a major role in the degradation of misfolded proteins. This Prochlorococcus marinus (strain NATL2A) protein is ATP-dependent Clp protease proteolytic subunit 1.